We begin with the raw amino-acid sequence, 181 residues long: ATP synthase subunit b 2 (181 aa).

Residues 1 to 12 (MAEGHGTTAHTG) show a composition bias toward low complexity. A disordered region spans residues 1-20 (MAEGHGTTAHTGAEGGHKAP). Residues 33 to 53 (LVSLLIAFVALYLIVSKVALP) traverse the membrane as a helical segment.

Belongs to the ATPase B chain family. F-type ATPases have 2 components, F(1) - the catalytic core - and F(0) - the membrane proton channel. F(1) has five subunits: alpha(3), beta(3), gamma(1), delta(1), epsilon(1). F(0) has three main subunits: a(1), b(2) and c(10-14). The alpha and beta chains form an alternating ring which encloses part of the gamma chain. F(1) is attached to F(0) by a central stalk formed by the gamma and epsilon chains, while a peripheral stalk is formed by the delta and b chains.

It localises to the cell inner membrane. In terms of biological role, f(1)F(0) ATP synthase produces ATP from ADP in the presence of a proton or sodium gradient. F-type ATPases consist of two structural domains, F(1) containing the extramembraneous catalytic core and F(0) containing the membrane proton channel, linked together by a central stalk and a peripheral stalk. During catalysis, ATP synthesis in the catalytic domain of F(1) is coupled via a rotary mechanism of the central stalk subunits to proton translocation. Functionally, component of the F(0) channel, it forms part of the peripheral stalk, linking F(1) to F(0). The b'-subunit is a diverged and duplicated form of b found in plants and photosynthetic bacteria. This is ATP synthase subunit b 2 (atpF2) from Rhodopseudomonas palustris (strain BisA53).